The primary structure comprises 410 residues: Lissencephaly-1 homolog (410 aa).

The region spanning 7 to 39 (QRDELNRAIADYLRSNGYEEAYSVFKKEAELDV) is the LisH domain. Positions 56–82 (TSVIRLQKKVMELESKLNEAKEEFTSG) form a coiled coil. WD repeat units follow at residues 106-147 (GHRS…RTLK), 148-187 (GHTD…CIRT), 190-229 (GHDH…CVKT), 232-271 (GHRE…CKAE), 274-333 (EHEH…CLMT), 336-377 (GHDN…KTLN), and 378-410 (AHEH…WECR).

This sequence belongs to the WD repeat LIS1/nudF family. As to quaternary structure, can self-associate. Component of the cytosolic PAF-AH (I) heterotetrameric enzyme, which is composed of PAFAH1B1 (beta), PAFAH1B2 (alpha2) and PAFAH1B3 (alpha1) subunits. The catalytic activity of the enzyme resides in the alpha1 (PAFAH1B3) and alpha2 (PAFAH1B2) subunits, whereas the beta subunit (PAFAH1B1) has regulatory activity. Trimer formation is not essential for the catalytic activity. Interacts with dynein, dynactin, NDE1 and NDEL1.

It localises to the cytoplasm. The protein resides in the cytoskeleton. Its subcellular location is the microtubule organizing center. It is found in the centrosome. In terms of biological role, regulatory subunit (beta subunit) of the cytosolic type I platelet-activating factor (PAF) acetylhydrolase (PAF-AH (I)), an enzyme that catalyzes the hydrolyze of the acetyl group at the sn-2 position of PAF and its analogs and participates in PAF inactivation. Regulates the PAF-AH (I) activity in a catalytic dimer composition-dependent manner. Positively regulates the activity of the minus-end directed microtubule motor protein dynein. May enhance dynein-mediated microtubule sliding by targeting dynein to the microtubule plus end. Required for several dynein- and microtubule-dependent processes such as the maintenance of Golgi integrity, the peripheral transport of microtubule fragments and the coupling of the nucleus and centrosome. May be required for proliferation of neuronal precursors and neuronal migration. This is Lissencephaly-1 homolog from Gallus gallus (Chicken).